The chain runs to 469 residues: Uronate isomerase (469 aa).

This sequence belongs to the metallo-dependent hydrolases superfamily. Uronate isomerase family.

It carries out the reaction D-glucuronate = D-fructuronate. It catalyses the reaction aldehydo-D-galacturonate = keto-D-tagaturonate. Its pathway is carbohydrate metabolism; pentose and glucuronate interconversion. In Edwardsiella ictaluri (strain 93-146), this protein is Uronate isomerase.